The chain runs to 489 residues: Monocarboxylate transporter 2 (489 aa).

The Cytoplasmic segment spans residues 1–21 (MPSESSVKATAAPPPFPLPPD). Residues 22 to 42 (GGWGWVVVCASFISIGFSYAF) form a helical membrane-spanning segment. The Extracellular segment spans residues 43 to 65 (PKAVTVFFNDIKDIFKTTSSQIA). Residues 66–86 (WISSIMLAVMYAGGPISSVLV) traverse the membrane as a helical segment. The Cytoplasmic segment spans residues 87-95 (NNYGSRPVV). The chain crosses the membrane as a helical span at residues 96 to 116 (IVGGLLCCTGMILASFSSSVI). Topologically, residues 117–121 (ELYLT) are extracellular. A helical membrane pass occupies residues 122–142 (VGFIGGLGLAFNLQPALTIIG). The Cytoplasmic segment spans residues 143–154 (KYFYRKRPLANG). A helical transmembrane segment spans residues 155-175 (FAMAGSPVFLSTLAPFNQFLF). The Extracellular segment spans residues 176–179 (NSYG). The helical transmembrane segment at 180–200 (WKGSFLILGAIFLHSCVAGCL) threads the bilayer. Topologically, residues 201–250 (MRPVGPSPRAAKSKSKVGSRQDSSTKRLSKVSTAEKINRFLDFGLFTHRG) are cytoplasmic. The tract at residues 206 to 227 (PSPRAAKSKSKVGSRQDSSTKR) is disordered. The chain crosses the membrane as a helical span at residues 251 to 271 (FLIYLSGNVVLFLGMFAPIIF). The Extracellular portion of the chain corresponds to 272–286 (LAPYAKDKGVDDYNS). Residues 287 to 307 (AFLLSVMAFTDMFARPSVGLI) form a helical membrane-spanning segment. Residues 308-316 (ANTSLIRPR) are Cytoplasmic-facing. Residues 317-337 (IQYLFSVAIMFTGICHLLCPL) traverse the membrane as a helical segment. At 338–342 (AHSYT) the chain is on the extracellular side. The chain crosses the membrane as a helical span at residues 343–363 (ALVVYVIFFGIGFGSISSLLF). The Cytoplasmic portion of the chain corresponds to 364-377 (ECLMDQVGASRFSS). A helical transmembrane segment spans residues 378-398 (AVGLVTIVECCPVLFGPPLAG). Over 399–410 (KLLDITGQYKYL) the chain is Extracellular. Residues 411 to 431 (YIASGIVVLSSGIYLLICNAI) form a helical membrane-spanning segment. The Cytoplasmic portion of the chain corresponds to 432–489 (NYRLLEKERKREKARRKKSASQASKEMEALSRSKQDDVTVKVSNTHNPPSDRDKESSI). Residues 441–489 (KREKARRKKSASQASKEMEALSRSKQDDVTVKVSNTHNPPSDRDKESSI) form a disordered region. Basic and acidic residues-rich tracts occupy residues 456 to 470 (KEME…DDVT) and 480 to 489 (PSDRDKESSI).

It belongs to the major facilitator superfamily. Monocarboxylate porter (TC 2.A.1.13) family. Homodimer. Interacts with GRID2IP. Interacts with EMB; interaction mediates SLC16A7 targeting to the plasma membrane. Interacts with isoform 2 of BSG. In terms of tissue distribution, detected in brain and kidney (at protein level).

The protein resides in the cell membrane. It localises to the basolateral cell membrane. Its subcellular location is the cytoplasm. It carries out the reaction 3-methyl-2-oxobutanoate(out) + H(+)(out) = 3-methyl-2-oxobutanoate(in) + H(+)(in). The enzyme catalyses (S)-lactate(in) + H(+)(in) = (S)-lactate(out) + H(+)(out). It catalyses the reaction acetoacetate(out) + H(+)(out) = acetoacetate(in) + H(+)(in). The catalysed reaction is (R)-3-hydroxybutanoate(out) + H(+)(out) = (R)-3-hydroxybutanoate(in) + H(+)(in). It carries out the reaction 4-methyl-2-oxopentanoate(out) + H(+)(out) = 4-methyl-2-oxopentanoate(in) + H(+)(in). The enzyme catalyses pyruvate(out) + H(+)(out) = pyruvate(in) + H(+)(in). It catalyses the reaction (S)-3-hydroxybutanoate(out) + H(+)(out) = (S)-3-hydroxybutanoate(in) + H(+)(in). Transport activity exhibits steep dependence on substrate concentration. Substrate concentration sensitivity of SLC16A7 arises from the strong inter-subunit cooperativity of the SLC16A7 dimer during transport. Inhibited by AR-C155858. Its function is as follows. Proton-coupled monocarboxylate symporter. Catalyzes the rapid transport across the plasma membrane of monocarboxylates such as L-lactate, pyruvate and ketone bodies, acetoacetate, beta-hydroxybutyrate and acetate. Dimerization is functionally required and both subunits work cooperatively in transporting substrate. This is Monocarboxylate transporter 2 (Slc16a7) from Rattus norvegicus (Rat).